The chain runs to 618 residues: 1-deoxy-D-xylulose-5-phosphate synthase (618 aa).

Thiamine diphosphate is bound by residues His-70 and 111 to 113 (GHS). Position 142 (Asp-142) interacts with Mg(2+). Thiamine diphosphate contacts are provided by residues 143–144 (GS), Asn-171, Tyr-278, and Glu-360. A Mg(2+)-binding site is contributed by Asn-171.

The protein belongs to the transketolase family. DXPS subfamily. As to quaternary structure, homodimer. Requires Mg(2+) as cofactor. The cofactor is thiamine diphosphate.

The catalysed reaction is D-glyceraldehyde 3-phosphate + pyruvate + H(+) = 1-deoxy-D-xylulose 5-phosphate + CO2. It functions in the pathway metabolic intermediate biosynthesis; 1-deoxy-D-xylulose 5-phosphate biosynthesis; 1-deoxy-D-xylulose 5-phosphate from D-glyceraldehyde 3-phosphate and pyruvate: step 1/1. Functionally, catalyzes the acyloin condensation reaction between C atoms 2 and 3 of pyruvate and glyceraldehyde 3-phosphate to yield 1-deoxy-D-xylulose-5-phosphate (DXP). The sequence is that of 1-deoxy-D-xylulose-5-phosphate synthase from Helicobacter pylori (strain J99 / ATCC 700824) (Campylobacter pylori J99).